Reading from the N-terminus, the 124-residue chain is Fluoride-specific ion channel FluC (124 aa).

A run of 4 helical transmembrane segments spans residues 4–24 (ILAI…LAGG), 32–52 (AFPW…GLIM), 68–88 (GLTI…YETF), and 101–121 (LNVL…IMAA). 2 residues coordinate Na(+): G75 and T78.

The protein belongs to the fluoride channel Fluc/FEX (TC 1.A.43) family.

The protein localises to the cell inner membrane. The catalysed reaction is fluoride(in) = fluoride(out). Its activity is regulated as follows. Na(+) is not transported, but it plays an essential structural role and its presence is essential for fluoride channel function. In terms of biological role, fluoride-specific ion channel. Important for reducing fluoride concentration in the cell, thus reducing its toxicity. The sequence is that of Fluoride-specific ion channel FluC from Geobacter sulfurreducens (strain ATCC 51573 / DSM 12127 / PCA).